A 258-amino-acid chain; its full sequence is Caffeoyl-CoA O-methyltransferase 1 (258 aa).

A compositionally biased stretch (low complexity) spans 1 to 16 (MATTATEAAPAQEQQA). Positions 1–31 (MATTATEAAPAQEQQANGNGEQKTRHSEVGH) are disordered. Basic and acidic residues predominate over residues 22 to 31 (QKTRHSEVGH). K32 serves as a coordination point for substrate. S-adenosyl-L-methionine is bound by residues T74, E96, 98–99 (GV), S104, D122, and A151. D174 contacts substrate. An a divalent metal cation-binding site is contributed by D174. Residue D176 coordinates S-adenosyl-L-methionine. A divalent metal cation contacts are provided by D200 and N201. N205 serves as a coordination point for substrate.

This sequence belongs to the class I-like SAM-binding methyltransferase superfamily. Cation-dependent O-methyltransferase family. CCoAMT subfamily. A divalent metal cation is required as a cofactor.

The catalysed reaction is (E)-caffeoyl-CoA + S-adenosyl-L-methionine = (E)-feruloyl-CoA + S-adenosyl-L-homocysteine + H(+). The protein operates within aromatic compound metabolism; phenylpropanoid biosynthesis. In terms of biological role, methylates caffeoyl-CoA to feruloyl-CoA and 5-hydroxyferuloyl-CoA to sinapoyl-CoA. Plays a role in the synthesis of feruloylated polysaccharides. Involved in the reinforcement of the plant cell wall. Also involved in the responding to wounding or pathogen challenge by the increased formation of cell wall-bound ferulic acid polymers. In Zea mays (Maize), this protein is Caffeoyl-CoA O-methyltransferase 1 (CCOAOMT1).